Consider the following 519-residue polypeptide: F-box only protein 31-A (519 aa).

The disordered stretch occupies residues 11-37 (GQSGGCRRRQQRKGAGNDPELEDEEEE). In terms of domain architecture, F-box spans 54–100 (PHSLLLLPPEILVEIFSLLPGTELGGLAQVCSKFRQILTTDTIWKRR). Zn(2+) is bound by residues Cys-196, His-204, Cys-220, and His-226. A compositionally biased stretch (basic and acidic residues) spans 369–390 (REQRQTDNEEDDGRGAGPDKAE). Residues 369–424 (REQRQTDNEEDDGRGAGPDKAEPAQQPAPLLRPPNEDANGADDDGDGGEQKPPNVQ) are disordered.

This sequence belongs to the FBXO31 family. In terms of assembly, part of a SCF (SKP1-cullin-F-box) protein ligase complex SCF(FBXO31).

It is found in the cytoplasm. It functions in the pathway protein modification; protein ubiquitination. Its function is as follows. Substrate-recognition component of the SCF(FBXO31) protein ligase complex, which specifically mediates the ubiquitination of proteins amidated at their C-terminus in response to oxidative stress, leading to their degradation by the proteasome. Fbxo31 specifically recognizes and binds C-terminal peptides bearing an amide: C-terminal amidation in response to oxidative stress takes place following protein fragmentation. The SCF(FBXO31) also plays a role in G1 arrest following DNA damage by mediating ubiquitination of phosphorylated cyclin-D1 (ccnd1), promoting its degradation by the proteasome, resulting in G1 arrest. The SCF(FBXO31) complex is however not a major regulator of ccnd1 stability during the G1/S transition. In Xenopus laevis (African clawed frog), this protein is F-box only protein 31-A (fbxo31-a).